Consider the following 169-residue polypeptide: uncharacterized protein (169 aa).

Positions 1–21 are cleaved as a signal peptide; that stretch reads MVPVARASLFTLACLLVSVCA.

As to expression, component of the acid-soluble and acid-insoluble organic matrix of calcified shell layers (at protein level).

The protein resides in the secreted. This is an uncharacterized protein from Haliotis asinina (Donkey's ear abalone).